The sequence spans 607 residues: uncharacterized protein (607 aa).

The zn(2)-C6 fungal-type DNA-binding region spans 16 to 44 (CTVCRKRKLKCDGNKPCGRCIRLNTPKEC).

The protein localises to the nucleus. This is an uncharacterized protein from Saccharomyces cerevisiae (strain ATCC 204508 / S288c) (Baker's yeast).